The following is a 367-amino-acid chain: Cyclic AMP-responsive element-binding protein 3-like protein 4 (367 aa).

A required for transcriptional activation region spans residues 1–52; it reads MELGCPELLEPPEDIFSTGSFLELGFNGPPSKVPGLQKSESDDFLNLFIDPN. The Cytoplasmic portion of the chain corresponds to 1-267; sequence MELGCPELLE…QTSSRAAQTS (267 aa). Residues 58–81 form a disordered region; it reads ETSPGSDSGVSEDPGSPAPQAPSS. The region spanning 189-252 is the bZIP domain; that stretch reads ILKKIRRKIR…ISLVAQVHQL (64 aa). Residues 191–230 are basic motif; sequence KKIRRKIRNKQSAQDSRRRKKEYIDGLESRVAACSEQNQK. The segment at 231-252 is leucine-zipper; the sequence is LQRKVQELERQNISLVAQVHQL. The helical; Signal-anchor for type II membrane protein transmembrane segment at 268–288 threads the bilayer; it reads TCVLILLFSLALIILPSFSPF. At 289 to 367 the chain is on the lumenal side; sequence QSQPEARSEG…IRGMVHADEM (79 aa). Asn-338 carries N-linked (GlcNAc...) asparagine glycosylation.

The protein belongs to the bZIP family. ATF subfamily. Binds DNA as a dimer. Forms a heterodimer with CREM isoform Delta. Post-translationally, controlled by regulated intramembrane proteolysis (RIP). Following ER stress a fragment containing the cytoplasmic transcription factor domain is released by proteolysis. The cleavage seems to be performed sequentially by site-1 and site-2 proteases (PS1 and PS2). PS1 cleavage may be suppressed by a determinant in the C-terminal region.

Its subcellular location is the endoplasmic reticulum membrane. It localises to the nucleus. In terms of biological role, transcriptional activator that may play a role in the unfolded protein response. Binds to the UPR element (UPRE) but not to CRE element. Preferentially binds DNA with to the consensus sequence 5'-T[GT]ACGT[GA][GT]-3' and has transcriptional activation activity from UPRE. Binds to NF-kappa-B site and has transcriptional activation activity from NF-kappa-B-containing regulatory elements. Increases the binding of CREM isoform Delta with CRE. The CREM isoform Delta-CREB3L4 heterodimer functions through CRE but not through UPRE and may recruit HIRA to CRE to regulate histone exchange. In Rattus norvegicus (Rat), this protein is Cyclic AMP-responsive element-binding protein 3-like protein 4 (Creb3l4).